The following is a 280-amino-acid chain: Tobamovirus multiplication protein 2A (280 aa).

The Cytoplasmic portion of the chain corresponds to 1-13; that stretch reads MACRGCLECLLKL. The helical transmembrane segment at 14-34 threads the bilayer; sequence LNFLLAVAGLGMIGYGIYLFV. The Extracellular segment spans residues 35–78; sequence EYKRVTDNSVTFDLTNGDQSYVSFGRPILMAVSLSSNIFDNLPK. Residues 79–99 traverse the membrane as a helical segment; sequence AWFIYLFIGIGVALFVISCCG. Topologically, residues 100 to 113 are cytoplasmic; that stretch reads CVGTCSRSVCCLSC. A helical transmembrane segment spans residues 114 to 134; it reads YSLLLILLILVELGFAAFIFF. Residues 135–162 are Extracellular-facing; the sequence is DNSWRDELPSDRTGNFDTIYNFLRENWK. The chain crosses the membrane as a helical span at residues 163–183; sequence IVRWVALGAVVFEALLFLLAL. Topologically, residues 184–280 are cytoplasmic; the sequence is MVRAANTPAE…NEEKGRCTIM (97 aa). 2 positions are modified to phosphoserine: serine 196 and serine 233. The tract at residues 258–280 is disordered; that stretch reads SESHRFQQMPAQPNEEKGRCTIM. Positions 271–280 are enriched in basic and acidic residues; it reads NEEKGRCTIM.

This sequence belongs to the tetraspanin (TM4SF) family. In terms of assembly, homodimer. Constituent of tobamovirus replication complex. Interacts with TOM1. Expressed in rosette leaves.

The protein resides in the vacuole membrane. Functionally, necessary for the efficient intracellular multiplication of tobamoviruses, being a component of the replication complex. The polypeptide is Tobamovirus multiplication protein 2A (TOM2A) (Arabidopsis thaliana (Mouse-ear cress)).